Here is a 224-residue protein sequence, read N- to C-terminus: UPF0758 protein Bpro_0948 (224 aa).

One can recognise an MPN domain in the interval Leu-102–Leu-224. Zn(2+) is bound by residues His-173, His-175, and Asp-186. Positions His-173–Asp-186 match the JAMM motif motif.

The protein belongs to the UPF0758 family.

This Polaromonas sp. (strain JS666 / ATCC BAA-500) protein is UPF0758 protein Bpro_0948.